A 297-amino-acid polypeptide reads, in one-letter code: MAVRPVLAVGSYLPHAPWPWGVIDQAARVLLPASTTVRAAVSLPNASAQLVRASGVLPADGTRRAVLYLHGGAFLTCGANSHGRLVELLSKFADSPVLVVDYRLIPKHSIGMALDDCHDGYRWLRLLGYEPEQIVLAGDSAGGYLALALAQRLQEVGEEPAALVAISPLLQLAKEHKQAHPNIKTDAMFPARAFDALDALVASAAARNQVDGEPEELYEPLEHITPGLPRTLIHVSGSEVLLHDAQLAAAKLAAAGVPAEVRVWPGQVHDFQVAASMLPEAIRSLRQIGEYIREATG.

Catalysis depends on residues Ser140, Glu239, and His269.

This sequence belongs to the 'GDXG' lipolytic enzyme family.

It localises to the secreted. The catalysed reaction is a fatty acid ester + H2O = an aliphatic alcohol + a fatty acid + H(+). It catalyses the reaction a butanoate ester + H2O = an aliphatic alcohol + butanoate + H(+). The enzyme catalyses an acetyl ester + H2O = an aliphatic alcohol + acetate + H(+). It carries out the reaction decanoate ester + H2O = decanoate + an aliphatic alcohol + H(+). The catalysed reaction is an octanoate ester + H2O = an aliphatic alcohol + octanoate + H(+). It catalyses the reaction a dodecanoate ester + H2O = an aliphatic alcohol + dodecanoate + H(+). The enzyme catalyses hexadecanoate ester + H2O = an aliphatic alcohol + hexadecanoate + H(+). With respect to regulation, inhibited by the ionic detergent SDS and by the serine protease inhibitor PMSF. Inhibited by the FDA approved drugs Diosmin, Acarbose and Ouabain. These drugs remain bound in the active site pocket and could be probable drug candidates to combat TB disease. Functionally, esterase that shows preference for short chain fatty acids. Contributes to the growth of M.tuberculosis during the nutritive stress. Elicits strong humoral response in both extrapulmonary and relapsed cases of tuberculosis patients. In Mycobacterium tuberculosis (strain ATCC 25618 / H37Rv), this protein is Esterase LipU.